The primary structure comprises 229 residues: 3-isopropylmalate dehydratase small subunit (229 aa).

A disordered region spans residues 208 to 229 (KIESAREPDDDWTGPLADRGII).

This sequence belongs to the LeuD family. LeuD type 1 subfamily. In terms of assembly, heterodimer of LeuC and LeuD.

The catalysed reaction is (2R,3S)-3-isopropylmalate = (2S)-2-isopropylmalate. It participates in amino-acid biosynthesis; L-leucine biosynthesis; L-leucine from 3-methyl-2-oxobutanoate: step 2/4. Functionally, catalyzes the isomerization between 2-isopropylmalate and 3-isopropylmalate, via the formation of 2-isopropylmaleate. The sequence is that of 3-isopropylmalate dehydratase small subunit from Bifidobacterium longum subsp. infantis (strain ATCC 15697 / DSM 20088 / JCM 1222 / NCTC 11817 / S12).